A 253-amino-acid polypeptide reads, in one-letter code: tRNA (guanine-N(7)-)-methyltransferase (253 aa).

The span at 1–12 (MSQTPMPQPDQA) shows a compositional bias: pro residues. The disordered stretch occupies residues 1–39 (MSQTPMPQPDQAPPVDVGQPVDEAEAKRRRFKTHGRKKG). Positions 27-39 (KRRRFKTHGRKKG) are enriched in basic residues. S-adenosyl-L-methionine-binding residues include Glu84, Asp109, Asn136, and Asp159. Residue Asp159 is part of the active site. Substrate-binding positions include Lys163, Asp195, and 232 to 235 (TNFE).

It belongs to the class I-like SAM-binding methyltransferase superfamily. TrmB family.

It carries out the reaction guanosine(46) in tRNA + S-adenosyl-L-methionine = N(7)-methylguanosine(46) in tRNA + S-adenosyl-L-homocysteine. It participates in tRNA modification; N(7)-methylguanine-tRNA biosynthesis. Catalyzes the formation of N(7)-methylguanine at position 46 (m7G46) in tRNA. This is tRNA (guanine-N(7)-)-methyltransferase from Magnetococcus marinus (strain ATCC BAA-1437 / JCM 17883 / MC-1).